The following is a 373-amino-acid chain: Probable tRNA sulfurtransferase (373 aa).

The 105-residue stretch at 54–158 (NKNIEELSKV…NDVAYFYHKI (105 aa)) folds into the THUMP domain. ATP is bound by residues 176-177 (LF), 201-202 (NF), Lys256, Gly278, and Gln287.

This sequence belongs to the ThiI family.

The protein resides in the cytoplasm. The catalysed reaction is [ThiI sulfur-carrier protein]-S-sulfanyl-L-cysteine + a uridine in tRNA + 2 reduced [2Fe-2S]-[ferredoxin] + ATP + H(+) = [ThiI sulfur-carrier protein]-L-cysteine + a 4-thiouridine in tRNA + 2 oxidized [2Fe-2S]-[ferredoxin] + AMP + diphosphate. It catalyses the reaction [ThiS sulfur-carrier protein]-C-terminal Gly-Gly-AMP + S-sulfanyl-L-cysteinyl-[cysteine desulfurase] + AH2 = [ThiS sulfur-carrier protein]-C-terminal-Gly-aminoethanethioate + L-cysteinyl-[cysteine desulfurase] + A + AMP + 2 H(+). The protein operates within cofactor biosynthesis; thiamine diphosphate biosynthesis. Catalyzes the ATP-dependent transfer of a sulfur to tRNA to produce 4-thiouridine in position 8 of tRNAs, which functions as a near-UV photosensor. Also catalyzes the transfer of sulfur to the sulfur carrier protein ThiS, forming ThiS-thiocarboxylate. This is a step in the synthesis of thiazole, in the thiamine biosynthesis pathway. The sulfur is donated as persulfide by IscS. The protein is Probable tRNA sulfurtransferase of Saccharolobus islandicus (strain M.16.4 / Kamchatka #3) (Sulfolobus islandicus).